Here is a 322-residue protein sequence, read N- to C-terminus: Tetraacyldisaccharide 4'-kinase (322 aa).

54 to 61 contacts ATP; that stretch reads SVGGTGKT.

This sequence belongs to the LpxK family.

The catalysed reaction is a lipid A disaccharide + ATP = a lipid IVA + ADP + H(+). Its pathway is glycolipid biosynthesis; lipid IV(A) biosynthesis; lipid IV(A) from (3R)-3-hydroxytetradecanoyl-[acyl-carrier-protein] and UDP-N-acetyl-alpha-D-glucosamine: step 6/6. In terms of biological role, transfers the gamma-phosphate of ATP to the 4'-position of a tetraacyldisaccharide 1-phosphate intermediate (termed DS-1-P) to form tetraacyldisaccharide 1,4'-bis-phosphate (lipid IVA). This is Tetraacyldisaccharide 4'-kinase from Francisella philomiragia subsp. philomiragia (strain ATCC 25017 / CCUG 19701 / FSC 153 / O#319-036).